The chain runs to 431 residues: Ubiquitin-like modifier-activating enzyme 5 (431 aa).

Residues Gly92, Asp113, Lys136, Asn159, and Asn197 each contribute to the ATP site. The Zn(2+) site is built by Cys239 and Cys242. Cys263 acts as the Glycyl thioester intermediate in catalysis. Zn(2+) contacts are provided by Cys316 and Cys321. A disordered region spans residues 339–396 (AKAKMEADASTTIDEGPLHDDNEWNISVVDDENEKDTTKAASSSDTLPEGLTRELPVA).

It belongs to the ubiquitin-activating E1 family. UBA5 subfamily.

In terms of biological role, E1-like enzyme which activates UFM1. In Arabidopsis thaliana (Mouse-ear cress), this protein is Ubiquitin-like modifier-activating enzyme 5.